Reading from the N-terminus, the 359-residue chain is Protein mab-21-like 2 (359 aa).

The protein belongs to the mab-21 family.

Its subcellular location is the nucleus. It localises to the cytoplasm. Functionally, required for several aspects of embryonic development including normal development of the eye. The protein is Protein mab-21-like 2 (MAB21L2) of Homo sapiens (Human).